A 660-amino-acid polypeptide reads, in one-letter code: Glutenin, high molecular weight subunit 12 (660 aa).

An N-terminal signal peptide occupies residues 1 to 21 (MAKRLVLFAAVVIALVALTTA). Over residues 127–136 (YYPSVTSPRQ) the composition is skewed to polar residues. Residues 127–660 (YYPSVTSPRQ…EGGDALSASQ (534 aa)) form a disordered region. 4 stretches are compositionally biased toward low complexity: residues 141–166 (PGQA…QGQQ), 187–200 (QGYY…PGQG), 208–248 (QGYY…WQQG), and 255–275 (QQLG…GQQG). Over residues 276–286 (HYPTSLQQPGQ) the composition is skewed to polar residues. Positions 296–365 (QQQPAQGQQG…QQQPGQGQQG (70 aa)) are enriched in low complexity. Residues 370–384 (SLQQPGQQGHYPTSL) are compositionally biased toward polar residues. Low complexity-rich tracts occupy residues 385 to 426 (QQLG…GQQG), 478 to 514 (PGQR…PGQG), 522 to 535 (QGYY…PGQG), and 551 to 577 (QQTG…GQQG). Positions 590-604 (QQSGQGQQSGQGHQP) are enriched in gly residues.

It belongs to the gliadin/glutenin family. As to quaternary structure, disulfide-bridge linked aggregates.

Functionally, glutenins are high-molecular weight seed storage proteins of wheat endosperm. Thought to be responsible for the visco-elastic property of wheat dough. This Triticum aestivum (Wheat) protein is Glutenin, high molecular weight subunit 12.